The sequence spans 121 residues: Regulator of ribonuclease activity B (121 aa).

It belongs to the RraB family. In terms of assembly, interacts with the C-terminal region of Rne.

The protein resides in the cytoplasm. Its function is as follows. Globally modulates RNA abundance by binding to RNase E (Rne) and regulating its endonucleolytic activity. Can modulate Rne action in a substrate-dependent manner by altering the composition of the degradosome. This Psychromonas ingrahamii (strain DSM 17664 / CCUG 51855 / 37) protein is Regulator of ribonuclease activity B.